Reading from the N-terminus, the 24-residue chain is Brevinin-1Pd (24 aa).

Cys-18 and Cys-24 form a disulfide bridge.

As to expression, expressed by the skin glands.

It localises to the secreted. In terms of biological role, antibacterial activity against Gram-positive bacterium S.aureus and Gram-negative bacterium E.coli. Has activity against C.albicans. The protein is Brevinin-1Pd of Lithobates pipiens (Northern leopard frog).